Reading from the N-terminus, the 840-residue chain is Sorting nexin-25 (840 aa).

One can recognise a PXA domain in the interval 1–164; that stretch reads MDRVLRDVFD…MLLRQLEYRE (164 aa). An RGS domain is found at 287–401; that stretch reads QFEDIMTNPF…LVSDLYEKLM (115 aa). The tract at residues 404 to 437 is disordered; that stretch reads EEEEEPDAQLASEKDELGSGGEAGEEAVEGTSGV. The stretch at 446–494 forms a coiled coil; sequence IKLRELNEKLEYKRQALSSIQNAPKPDKKIISKLKDEILLIEKECTALQ. The region spanning 508–628 is the PX domain; the sequence is GLWRASITSA…AFLSPSPDYL (121 aa). S665 is subject to Phosphoserine.

Belongs to the sorting nexin family.

The protein localises to the endosome membrane. May be involved in several stages of intracellular trafficking. This is Sorting nexin-25 (Snx25) from Mus musculus (Mouse).